A 1921-amino-acid polypeptide reads, in one-letter code: Putative callose synthase 6 (1921 aa).

The interval 1-23 (MEASSSGTAELPRSLSRRAPSRA) is disordered. Residues 1–492 (MEASSSGTAE…FWNLFRDFDR (492 aa)) are Cytoplasmic-facing. The chain crosses the membrane as a helical span at residues 493–513 (MWIFLVMAFQAMVIVGWHGSG). Residues 514 to 526 (SLGDIFDKDVFKT) lie on the Extracellular side of the membrane. A helical transmembrane segment spans residues 527–547 (VLTIFITSAYLTLLQAALDII). Over 548–560 (LNFNAWKNFKFSQ) the chain is Cytoplasmic. The chain crosses the membrane as a helical span at residues 561–581 (ILRYLLKFAVAFMWAVLLPIA). Over 582–611 (YSKSVQRPTGVVKFFSTWTGDWKDQSFYTY) the chain is Extracellular. The helical transmembrane segment at 612-632 (AVSFYVLPNILAALLFLVPPF) threads the bilayer. Over 633–674 (RRAMECSDMRPIKVIMWWAQPKLYVGRGMHEDMFSLFKYTTF) the chain is Cytoplasmic. The chain crosses the membrane as a helical span at residues 675–695 (WIMLLISKLAFNYYVEILPLI). Residues 696-721 (TPTKMIMNLHIGHYQWHEFFPHATNN) lie on the Extracellular side of the membrane. A helical membrane pass occupies residues 722–742 (IGVVIAIWAPIVLVYLMDTQI). Over 743 to 1484 (WYAIFSTLFG…FDFYRMLSFY (742 aa)) the chain is Cytoplasmic. A helical membrane pass occupies residues 1485 to 1505 (FTTIGFYFSSMLTVLTVYAFL). The Extracellular segment spans residues 1506–1540 (YGRMYMVMSGLEKEILRLASPNQLEALEQALATQS). Residues 1541–1561 (IFQLGFLMVLPMVMEIGLEHG) form a helical membrane-spanning segment. The Cytoplasmic portion of the chain corresponds to 1562-1564 (FRS). A helical membrane pass occupies residues 1565 to 1585 (AIVDFFIMQLQLASVFFTFQL). At 1586-1628 (GTKSHYYGRTILHGGSKYRPTGRGFVVFHAKFAENYRLYSRSH) the chain is on the extracellular side. The chain crosses the membrane as a helical span at residues 1629 to 1649 (FVKGLELLLLLVVYQIYGHSY). The Cytoplasmic segment spans residues 1650–1655 (RSSNLY). The helical transmembrane segment at 1656-1676 (LYITVSMWFMVGSWLFAPFIF) threads the bilayer. At 1677–1730 (NPSGFEWQKTVDDWTDWKRWLGDRGGIGIPVEKSWESWWNVEQEHLKHTSIRGR) the chain is on the extracellular side. Residues 1731 to 1751 (ILEITLALRFFIYQYGIVYQL) form a helical membrane-spanning segment. Topologically, residues 1752-1759 (NISQRSKS) are cytoplasmic. Residues 1760 to 1780 (FLVYGLSWVVLLTSLLVLKMV) form a helical membrane-spanning segment. Residues 1781–1796 (SMGRRRFGTDFQLMFR) are Extracellular-facing. Residues 1797–1817 (ILKALLFLGFLSVMTILFVVF) form a helical membrane-spanning segment. The Cytoplasmic segment spans residues 1818 to 1823 (KLTLTD). A helical membrane pass occupies residues 1824–1844 (LSASVLAFLPTGWAILLIGQV). Topologically, residues 1845-1867 (LRSPIKALGVWDSVKELGRAYEN) are extracellular. Residues 1868–1888 (IMGLVIFAPIAVLSWFPIVSE) form a helical membrane-spanning segment. The Cytoplasmic segment spans residues 1889–1921 (FQARLLFNQAFSRGLQISMILAGRKDKATSSHK).

Belongs to the glycosyltransferase 48 family.

The protein resides in the cell membrane. It catalyses the reaction [(1-&gt;3)-beta-D-glucosyl](n) + UDP-alpha-D-glucose = [(1-&gt;3)-beta-D-glucosyl](n+1) + UDP + H(+). Functionally, probably involved in callose synthesis, but not required for callose formation after wounding or pathogen attack. During plant growth and development, callose is found as a transitory component of the cell plate in dividing cells, is a major component of pollen mother cell walls and pollen tubes, and is found as a structural component of plasmodesmatal canals. The polypeptide is Putative callose synthase 6 (CALS6) (Arabidopsis thaliana (Mouse-ear cress)).